A 117-amino-acid polypeptide reads, in one-letter code: Immunity protein BC_0921 (117 aa).

In terms of assembly, probably interacts with cognate toxin BC_0920 but not with other non-cognate toxins. The interaction inhibits the toxic activity of BC_0920.

Its subcellular location is the cytoplasm. Immunity component of an LXG toxin-immunity module. Neutralizes the RNase activity of cognate toxin BC_0920. Probably does not have immunity protein activity on other toxins with the LXG domain. The polypeptide is Immunity protein BC_0921 (Bacillus cereus (strain ATCC 14579 / DSM 31 / CCUG 7414 / JCM 2152 / NBRC 15305 / NCIMB 9373 / NCTC 2599 / NRRL B-3711)).